Here is a 207-residue protein sequence, read N- to C-terminus: Suppressor of IKBKE 1 (207 aa).

Coiled coils occupy residues 70-102 (HILL…DALE) and 162-193 (QFCK…SLQA).

It belongs to the SIKE family. Interacts with IKBKE and TBK1 via its coiled coil region. Interaction with TBK1 is disrupted upon viral infection or TLR3 stimulation. Interacts with CDC42BPB. Interacts with SIKE1 which mediates association with the STRIPAK core complex composed of PP2A catalytic and scaffolding subunits, the striatins (PP2A regulatory subunits), the striatin-associated proteins MOB4, STRIP1 and STRIP2, PDCD10 and members of the STE20 kinases, such as STK24 and STK26. In terms of tissue distribution, widely expressed. Expressed in brain, heart, skeletal muscle, colon, thymus, spleen, kidney, liver, small intestine, placenta, lung and leukocytes. Present in all cell lines tested (at protein level).

It is found in the cytoplasm. In terms of biological role, physiological suppressor of IKK-epsilon and TBK1 that plays an inhibitory role in virus- and TLR3-triggered IRF3. Inhibits TLR3-mediated activation of interferon-stimulated response elements (ISRE) and the IFN-beta promoter. May act by disrupting the interactions of IKBKE or TBK1 with TICAM1/TRIF, IRF3 and RIGI. Does not inhibit NF-kappa-B activation pathways. Associates with the striatin-interacting phosphatase and kinase (STRIPAK) core complex, forming the extended (SIKE1:SLMAP)STRIPAK complex. The (SIKE1:SLMAP)STRIPAK complex dephosphorylates STK3 leading to the inhibition of Hippo signaling and the control of cell growth. The sequence is that of Suppressor of IKBKE 1 from Homo sapiens (Human).